The sequence spans 157 residues: MSRRNTAKKTKRTEKSDPIYQSRLVNMVLNRIIKHGKKSLAYRILYRAMKQIQQKTEKNPLLVLRQAIKEVTPRLIVKSRRKSGSTYQVPFEIKPNQGKILAIRWLLEASRKRLGPNMESKFSSELIDATKGKGKAIRKKEETHKMAEANRAFADYL.

This sequence belongs to the universal ribosomal protein uS7 family. In terms of assembly, part of the 30S ribosomal subunit.

It is found in the plastid. Its subcellular location is the chloroplast. Functionally, one of the primary rRNA binding proteins, it binds directly to 16S rRNA where it nucleates assembly of the head domain of the 30S subunit. This Welwitschia mirabilis (Tree tumbo) protein is Small ribosomal subunit protein uS7cz/uS7cy (rps7-A).